We begin with the raw amino-acid sequence, 149 residues long: Transcriptional repressor NrdR (149 aa).

Residues Cys3–Cys34 fold into a zinc finger. The ATP-cone domain occupies Pro49–Glu139.

This sequence belongs to the NrdR family. Requires Zn(2+) as cofactor.

Functionally, negatively regulates transcription of bacterial ribonucleotide reductase nrd genes and operons by binding to NrdR-boxes. The chain is Transcriptional repressor NrdR from Albidiferax ferrireducens (strain ATCC BAA-621 / DSM 15236 / T118) (Rhodoferax ferrireducens).